A 510-amino-acid chain; its full sequence is NKAP family protein (510 aa).

Residues 1 to 22 (MSHRERDRDRDRDSDRDRDRNR) show a composition bias toward basic and acidic residues. 3 disordered regions span residues 1–128 (MSHR…VEIQ), 149–220 (ERKD…NYNG), and 239–401 (VYER…PISE). Residues 23 to 39 (YSRSRSRGSRSRSRSRS) show a composition bias toward basic residues. Positions 40 to 89 (RSRDRNRNRDYNKDRSSNRDSYYNDRDYKKDRSSNRDRDYYDRDRNRDYK) are enriched in basic and acidic residues. The span at 96-105 (SSGGGGGGSG) shows a compositional bias: gly residues. Low complexity-rich tracts occupy residues 112–123 (SSSYRESNSNNS) and 184–219 (NNNNRNYHGGNSRYVNNNNNNNNNNYNNNNNKSNYN). Residues 262-273 (NKKKSKKSRRKS) show a composition bias toward basic residues. Over residues 274 to 283 (SSNSDSSSSD) the composition is skewed to low complexity. The span at 292–322 (REKRKKSKSRKDKKKRKEKKKHQRKSSKRSS) shows a compositional bias: basic residues. Residues 342–351 (DSDRSDSEGR) show a composition bias toward basic and acidic residues. The span at 352-367 (SRKKRSKKRSKKRHDH) shows a compositional bias: basic residues. Basic and acidic residues predominate over residues 368–383 (HKESVHDASMWEEKVE).

The protein belongs to the NKAP family.

In Dictyostelium discoideum (Social amoeba), this protein is NKAP family protein.